The chain runs to 138 residues: Large ribosomal subunit protein uL16 (138 aa).

The segment covering 1 to 13 has biased composition (basic residues); sequence MLQPARRKYRKEQ. A disordered region spans residues 1 to 21; the sequence is MLQPARRKYRKEQKGRNTGIA.

This sequence belongs to the universal ribosomal protein uL16 family. Part of the 50S ribosomal subunit.

Its function is as follows. Binds 23S rRNA and is also seen to make contacts with the A and possibly P site tRNAs. The polypeptide is Large ribosomal subunit protein uL16 (Albidiferax ferrireducens (strain ATCC BAA-621 / DSM 15236 / T118) (Rhodoferax ferrireducens)).